The sequence spans 588 residues: MAMVDEPLYPIAVLIDELKNDDIQLRLNSIRRLSTIARALGEERTRKELIPFLSENSDDDDEVLLAMAEELGVFIPFVGGIEFAHVLLPPLESLCTVEETCVREKAVESLCKIGSQMKENDLVESFVPLVKRLAGGEWFAARVSACGIFHVAYQGCTDVLKTELRATYSQLCKDDMPMVRRAAASNLGKFATTVESTFLIAEIMTMFDDLTKDDQDSVRLLAVEGCAALGKLLEPQDCVARILPVIVNFSQDKSWRVRYMVANQLYELCEAVGPDCTRTDLVPAYVRLLRDNEAEVRIAAAGKVTKFCRLLNPELAIQHILPCVKELSSDSSQHVRSALASVIMGMAPILGKDSTIEHLLPIFLSLLKDEFPDVRLNIISKLDQVNQVIGIDLLSQSLLPAIVELAEDRHWRVRLAIIEYVPLLASQLGIGFFDDKLGALCMQWLQDKVYSIREAAANNLKRLAEEFGPEWAMQHLVPQVLDMVNNPHYLHRMMVLRAISLMAPVMGSEITCSKFLPVVVEASKDRVPNIKFNVAKLLQSLIPIVDQSVVDKTIRQCLVDLSEDPDVDVRYFANQALNSIDGSTAAQS.

HEAT repeat units lie at residues 2 to 42, 44 to 80, 81 to 119, 158 to 196, 197 to 235, 236 to 274, 275 to 313, 315 to 352, 353 to 391, 393 to 430, 432 to 469, 470 to 508, 509 to 547, and 549 to 586; these read AMVD…ALGE, RTRKELIPFLSENSDDDDEVLLAMAEELGVFIPFVGG, IEFAHVLLPPLESLCTVEETCVREKAVESLCKIGSQMKE, DVLKTELRATYSQLCKDDMPMVRRAAASNLGKFATTVES, TFLIAEIMTMFDDLTKDDQDSVRLLAVEGCAALGKLLEP, QDCVARILPVIVNFSQDKSWRVRYMVANQLYELCEAVGP, DCTRTDLVPAYVRLLRDNEAEVRIAAAGKVTKFCRLLNP, LAIQHILPCVKELSSDSSQHVRSALASVIMGMAPILGK, DSTIEHLLPIFLSLLKDEFPDVRLNIISKLDQVNQVIGI, LLSQSLLPAIVELAEDRHWRVRLAIIEYVPLLASQLGI, FFDDKLGALCMQWLQDKVYSIREAAANNLKRLAEEFGP, EWAMQHLVPQVLDMVNNPHYLHRMMVLRAISLMAPVMGS, EITCSKFLPVVVEASKDRVPNIKFNVAKLLQSLIPIVDQ, and VVDKTIRQCLVDLSEDPDVDVRYFANQALNSIDGSTAA.

This sequence belongs to the phosphatase 2A regulatory subunit A family. PP2A consists of a common heterodimeric core enzyme, composed of a 36 kDa catalytic subunit (subunit C) and a 65 kDa constant regulatory subunit (subunit A), that associates with a variety of regulatory subunits such as subunits B (the R2/B/PR55/B55, R3/B''/PR72/PR130/PR59 and R5/B'/B56 families) and the regulatory subunits TON2. Interacts with CYP20-1/ROC7. Also interacts with phosphatidic acid (PA), a lipid signaling molecule. Interacts with CHIP. Interacts with SIC/RON3. Post-translationally, ubiquitinated. CHIP-mediated ubiquitination enhances phosphatase activity after an abiotic stress such as low temperature or darkness. As to expression, mostly expressed in cell-dividing tissues such as apical meristems. Ubiquitous, with higher levels in roots and flowers (at protein level).

The protein resides in the cytoplasm. It localises to the cytosol. It is found in the nucleus. In terms of biological role, the A subunit of protein phosphatase 2A serves as a scaffolding molecule to coordinate the assembly of the catalytic subunit and a variable regulatory B subunit. Seems to act as a positive regulator of PP2A catalytic activity. Confers resistance to phosphatase inhibitors such as okadaic acid and cantharidin. Involved during developmental process such as seedling and floral developments, root gravitropism, and stomatal opening regulation. Involved in the regulation of auxin efflux, especially during basipetal (tips to base) auxin transport in roots, and appears to contribute to the perception of auxin efflux inhibitors such as 1-N-naphthylphthalamic acid (NPA) and to semicarbazone I (substituted phenylsemicarbazone of 2-acetylarylcarboxylic acids) (SCB-I). Modulates the magnitude of ethylene response in the hypocotyl and stem, and functions as a general positive transducer of early ABA signaling. The holoenzyme composed of PP2AA1, PP2A4 and B'ZETA or B'ETA acts as a negative regulator of plant innate immunity by controlling BAK1 phosphorylation state and activation in surface-localized immune receptor complexes. The polypeptide is Serine/threonine-protein phosphatase 2A 65 kDa regulatory subunit A alpha isoform (PP2AA1) (Arabidopsis thaliana (Mouse-ear cress)).